A 497-amino-acid chain; its full sequence is tRNA (adenine(58)-N(1))-methyltransferase non-catalytic subunit TRM6 (497 aa).

Disordered stretches follow at residues methionine 1–isoleucine 20 and threonine 69–aspartate 100. Residues lysine 79–aspartate 100 are compositionally biased toward basic and acidic residues. Substrate is bound at residue asparagine 94–glutamine 104. Threonine 107 is subject to Phosphothreonine. Substrate is bound by residues lysine 145–tyrosine 154 and arginine 175–histidine 182. The interval serine 276 to arginine 354 is disordered. A phosphoserine mark is found at serine 298 and serine 305. Positions aspartate 327–arginine 354 are enriched in basic and acidic residues. Substrate-binding positions include arginine 349, arginine 377, arginine 415–leucine 423, and glutamine 434–histidine 441. A disordered region spans residues serine 472 to serine 497. Basic and acidic residues predominate over residues glutamate 478–serine 497.

Belongs to the TRM6/GCD10 family. In terms of assembly, heterotetramer; composed of two copies of TRMT6 and two copies of TRMT61A. Expressed in brain, liver, testis and ovary.

It localises to the nucleus. Substrate-binding subunit of tRNA (adenine-N(1)-)-methyltransferase, which catalyzes the formation of N(1)-methyladenine at position 58 (m1A58) in initiator methionyl-tRNA. Together with the TRMT61A catalytic subunit, part of a mRNA N(1)-methyltransferase complex that mediates methylation of adenosine residues at the N(1) position of a small subset of mRNAs: N(1) methylation takes place in tRNA T-loop-like structures of mRNAs and is only present at low stoichiometries. This Homo sapiens (Human) protein is tRNA (adenine(58)-N(1))-methyltransferase non-catalytic subunit TRM6 (TRMT6).